A 39-amino-acid chain; its full sequence is Photosystem II reaction center protein J (39 aa).

A helical transmembrane segment spans residues 9–29 (LWLVGLVGGFAVITIVSLFIY).

It belongs to the PsbJ family. In terms of assembly, PSII is composed of 1 copy each of membrane proteins PsbA, PsbB, PsbC, PsbD, PsbE, PsbF, PsbH, PsbI, PsbJ, PsbK, PsbL, PsbM, PsbT, PsbX, PsbY, PsbZ, Psb30/Ycf12, at least 3 peripheral proteins of the oxygen-evolving complex and a large number of cofactors. It forms dimeric complexes.

The protein resides in the plastid. Its subcellular location is the chloroplast thylakoid membrane. One of the components of the core complex of photosystem II (PSII). PSII is a light-driven water:plastoquinone oxidoreductase that uses light energy to abstract electrons from H(2)O, generating O(2) and a proton gradient subsequently used for ATP formation. It consists of a core antenna complex that captures photons, and an electron transfer chain that converts photonic excitation into a charge separation. The sequence is that of Photosystem II reaction center protein J from Thalassiosira pseudonana (Marine diatom).